The primary structure comprises 566 residues: MPYLLLFALLFVLNTPLARAASCPHWNPQQAKAEVAQLRATLARWDEHYHRQGIALVADELYDQSHERLNHLQQCFAVGTSPSPLASARGPVPHPVPHTGVDKLADRQAVARWMTGKTGVWVQPKVDGVAVSLTYQQGRLVQLTSRGDGVHGHDWSRHIPQLGAVTRQLPEAVDLHLQGELYLRLDEHVQAKAGSANARGTVAGLLARKQLTGAQGNAIGLFVWGWPHGPEQQAERLAQLARLGFPDSQLYSIAIDTLEDAAHWREHWYRSALPFATDGVILRQGSRPPAERWQAKAPYWIAAWKYPYAQALAEVRDVRFRVGRTGRVTPVLHVQPVTLDDRRITQVSLGSLARWQRLDIRPGDQVAISLAGLTIPRLEHVVHRAVERQPITAPAPDQHHAHSCWQASEGCDEQFIARLTWLGGKQGLALPRTGPGTWRRLVEAGLVTSMTDWLQLDAERLQQAPGISRLTATQMLGSFDQARSRPFDQWLRALGVPIGKHLPLTGNWQALASRSAGQWQTVPGIGAKRSRQLVEFFAASEVQAIAAQLAEAGIEGFRTPPQRIEQ.

Lys-125 acts as the N6-AMP-lysine intermediate in catalysis.

The protein belongs to the NAD-dependent DNA ligase family. LigB subfamily.

The enzyme catalyses NAD(+) + (deoxyribonucleotide)n-3'-hydroxyl + 5'-phospho-(deoxyribonucleotide)m = (deoxyribonucleotide)n+m + AMP + beta-nicotinamide D-nucleotide.. Its function is as follows. Catalyzes the formation of phosphodiester linkages between 5'-phosphoryl and 3'-hydroxyl groups in double-stranded DNA using NAD as a coenzyme and as the energy source for the reaction. The polypeptide is DNA ligase B (Pseudomonas putida (strain ATCC 47054 / DSM 6125 / CFBP 8728 / NCIMB 11950 / KT2440)).